The following is a 196-amino-acid chain: Imidazole glycerol phosphate synthase subunit HisH (196 aa).

Residues 2 to 196 form the Glutamine amidotransferase type-1 domain; it reads NVVIVDTECA…LKRFLELTLC (195 aa). C77 functions as the Nucleophile in the catalytic mechanism. Residues H175 and E177 contribute to the active site.

In terms of assembly, heterodimer of HisH and HisF.

The protein resides in the cytoplasm. The enzyme catalyses 5-[(5-phospho-1-deoxy-D-ribulos-1-ylimino)methylamino]-1-(5-phospho-beta-D-ribosyl)imidazole-4-carboxamide + L-glutamine = D-erythro-1-(imidazol-4-yl)glycerol 3-phosphate + 5-amino-1-(5-phospho-beta-D-ribosyl)imidazole-4-carboxamide + L-glutamate + H(+). The catalysed reaction is L-glutamine + H2O = L-glutamate + NH4(+). It participates in amino-acid biosynthesis; L-histidine biosynthesis; L-histidine from 5-phospho-alpha-D-ribose 1-diphosphate: step 5/9. IGPS catalyzes the conversion of PRFAR and glutamine to IGP, AICAR and glutamate. The HisH subunit catalyzes the hydrolysis of glutamine to glutamate and ammonia as part of the synthesis of IGP and AICAR. The resulting ammonia molecule is channeled to the active site of HisF. The polypeptide is Imidazole glycerol phosphate synthase subunit HisH (Idiomarina loihiensis (strain ATCC BAA-735 / DSM 15497 / L2-TR)).